The sequence spans 128 residues: MSFEYPDNLKYMDSHEYVRLEGDVATVGITAFAIDQLGDIVFIELPEVGDELSQGETMGNIESVKAVEDIYAPINGTVLECNTAIADAPEQLAEDPYNNGWLLKIKVSGPAALDKAMSASDYQAKVEG.

The region spanning 24–106 (VATVGITAFA…YNNGWLLKIK (83 aa)) is the Lipoyl-binding domain. Residue Lys65 is modified to N6-lipoyllysine.

This sequence belongs to the GcvH family. In terms of assembly, the glycine cleavage system is composed of four proteins: P, T, L and H. Requires (R)-lipoate as cofactor.

Functionally, the glycine cleavage system catalyzes the degradation of glycine. The H protein shuttles the methylamine group of glycine from the P protein to the T protein. The chain is Glycine cleavage system H protein from Acaryochloris marina (strain MBIC 11017).